Here is a 205-residue protein sequence, read N- to C-terminus: Isochorismatase domain-containing protein 2 (205 aa).

2 positions are modified to phosphoserine: Ser-7 and Ser-202.

It belongs to the isochorismatase family. Interacts with CDKN2A.

It localises to the cytoplasm. The protein localises to the nucleus. The polypeptide is Isochorismatase domain-containing protein 2 (ISOC2) (Pongo abelii (Sumatran orangutan)).